The following is a 268-amino-acid chain: Tryptophan synthase alpha chain (268 aa).

Active-site proton acceptor residues include glutamate 49 and aspartate 60.

It belongs to the TrpA family. As to quaternary structure, tetramer of two alpha and two beta chains.

It carries out the reaction (1S,2R)-1-C-(indol-3-yl)glycerol 3-phosphate + L-serine = D-glyceraldehyde 3-phosphate + L-tryptophan + H2O. It functions in the pathway amino-acid biosynthesis; L-tryptophan biosynthesis; L-tryptophan from chorismate: step 5/5. The alpha subunit is responsible for the aldol cleavage of indoleglycerol phosphate to indole and glyceraldehyde 3-phosphate. The polypeptide is Tryptophan synthase alpha chain (Pseudomonas aeruginosa (strain ATCC 15692 / DSM 22644 / CIP 104116 / JCM 14847 / LMG 12228 / 1C / PRS 101 / PAO1)).